The primary structure comprises 139 residues: Holo-[acyl-carrier-protein] synthase (139 aa).

Mg(2+) is bound by residues D8 and E61.

It belongs to the P-Pant transferase superfamily. AcpS family. It depends on Mg(2+) as a cofactor.

The protein resides in the cytoplasm. It carries out the reaction apo-[ACP] + CoA = holo-[ACP] + adenosine 3',5'-bisphosphate + H(+). Transfers the 4'-phosphopantetheine moiety from coenzyme A to a Ser of acyl-carrier-protein. In Nitrobacter hamburgensis (strain DSM 10229 / NCIMB 13809 / X14), this protein is Holo-[acyl-carrier-protein] synthase.